We begin with the raw amino-acid sequence, 365 residues long: Chorismate synthase (365 aa).

Residues R48 and R54 each coordinate NADP(+). FMN contacts are provided by residues 131–133 (RSS), 243–244 (NA), G288, 303–307 (KPTSS), and R329.

The protein belongs to the chorismate synthase family. As to quaternary structure, homotetramer. FMNH2 serves as cofactor.

The enzyme catalyses 5-O-(1-carboxyvinyl)-3-phosphoshikimate = chorismate + phosphate. It participates in metabolic intermediate biosynthesis; chorismate biosynthesis; chorismate from D-erythrose 4-phosphate and phosphoenolpyruvate: step 7/7. Functionally, catalyzes the anti-1,4-elimination of the C-3 phosphate and the C-6 proR hydrogen from 5-enolpyruvylshikimate-3-phosphate (EPSP) to yield chorismate, which is the branch point compound that serves as the starting substrate for the three terminal pathways of aromatic amino acid biosynthesis. This reaction introduces a second double bond into the aromatic ring system. This chain is Chorismate synthase, found in Agrobacterium fabrum (strain C58 / ATCC 33970) (Agrobacterium tumefaciens (strain C58)).